A 189-amino-acid chain; its full sequence is Movement protein (189 aa).

It belongs to the tombusvirus/aureusvirus movement protein p22 family. In terms of assembly, interacts with host protein HFI22. Post-translationally, phosphorylated.

The protein resides in the host membrane. Transports viral genome to neighboring plant cells directly through plasmosdesmata, without any budding. The movement protein allows efficient cell to cell propagation, by bypassing the host cell wall barrier. This Capsicum annuum (Capsicum pepper) protein is Movement protein.